The sequence spans 338 residues: GDSL esterase/lipase At5g63170 (338 aa).

Residues 1–23 (MNSLVIQTTIVLVSVISVSIVHA) form the signal peptide. Catalysis depends on Ser-35, which acts as the Nucleophile. Residues Asp-313 and His-316 contribute to the active site.

Belongs to the 'GDSL' lipolytic enzyme family.

It is found in the secreted. This chain is GDSL esterase/lipase At5g63170, found in Arabidopsis thaliana (Mouse-ear cress).